The sequence spans 240 residues: Ubiquinone biosynthesis O-methyltransferase (240 aa).

Residues Arg-44, Gly-64, Asp-85, and Met-129 each coordinate S-adenosyl-L-methionine.

It belongs to the methyltransferase superfamily. UbiG/COQ3 family.

The catalysed reaction is a 3-demethylubiquinol + S-adenosyl-L-methionine = a ubiquinol + S-adenosyl-L-homocysteine + H(+). It catalyses the reaction a 3-(all-trans-polyprenyl)benzene-1,2-diol + S-adenosyl-L-methionine = a 2-methoxy-6-(all-trans-polyprenyl)phenol + S-adenosyl-L-homocysteine + H(+). It participates in cofactor biosynthesis; ubiquinone biosynthesis. O-methyltransferase that catalyzes the 2 O-methylation steps in the ubiquinone biosynthetic pathway. The polypeptide is Ubiquinone biosynthesis O-methyltransferase (Escherichia coli O81 (strain ED1a)).